A 736-amino-acid polypeptide reads, in one-letter code: Epithelial splicing regulatory protein 2 (736 aa).

RRM domains are found at residues 224-301, 325-405, and 659-736; these read TVIR…KATG, MIIR…RSTA, and ALVR…ACCE.

This sequence belongs to the ESRP family.

The protein localises to the nucleus. Its function is as follows. mRNA splicing factor that regulates the formation of epithelial cell-specific isoforms. Specifically regulates the expression of FGFR2-IIIb, an epithelial cell-specific isoform of fgfr2. Acts by directly binding specific sequences in mRNAs. Binds the GU-rich sequence motifs in the ISE/ISS-3, a cis-element regulatory region present in the mRNA of fgfr2. This Danio rerio (Zebrafish) protein is Epithelial splicing regulatory protein 2 (esrp2).